We begin with the raw amino-acid sequence, 280 residues long: Probable cell division protein WhiA (280 aa).

A DNA-binding region (H-T-H motif) is located at residues 246–279; the sequence is SLEQIAQFFERKYKVQITRSGIQHLNAKLKKLNQ.

Belongs to the WhiA family.

In terms of biological role, involved in cell division and chromosome segregation. The sequence is that of Probable cell division protein WhiA from Mycoplasma pneumoniae (strain ATCC 29342 / M129 / Subtype 1) (Mycoplasmoides pneumoniae).